A 173-amino-acid polypeptide reads, in one-letter code: Large ribosomal subunit protein uL10 (173 aa).

Belongs to the universal ribosomal protein uL10 family. In terms of assembly, part of the ribosomal stalk of the 50S ribosomal subunit. The N-terminus interacts with L11 and the large rRNA to form the base of the stalk. The C-terminus forms an elongated spine to which L12 dimers bind in a sequential fashion forming a multimeric L10(L12)X complex.

Functionally, forms part of the ribosomal stalk, playing a central role in the interaction of the ribosome with GTP-bound translation factors. This chain is Large ribosomal subunit protein uL10, found in Chlorobaculum parvum (strain DSM 263 / NCIMB 8327) (Chlorobium vibrioforme subsp. thiosulfatophilum).